The sequence spans 460 residues: Argininosuccinate lyase (460 aa).

The protein belongs to the lyase 1 family. Argininosuccinate lyase subfamily.

Its subcellular location is the cytoplasm. It carries out the reaction 2-(N(omega)-L-arginino)succinate = fumarate + L-arginine. The protein operates within amino-acid biosynthesis; L-arginine biosynthesis; L-arginine from L-ornithine and carbamoyl phosphate: step 3/3. In Sulfurimonas denitrificans (strain ATCC 33889 / DSM 1251) (Thiomicrospira denitrificans (strain ATCC 33889 / DSM 1251)), this protein is Argininosuccinate lyase.